Consider the following 419-residue polypeptide: MVETTTMMKVLVRVREFDVEKDLPAVEELERRCQVGLSGDMAAVHDHADDGDGAAAKEKKKTKTKTKKKKASMSLCVEQIGDPLARVRHAPEHVMLVAEYGEEEEKKKVVGVIKACVKTVSRGGKQEKPFVKVANLLGLRVSPSHRRLGIGTALVRRAEEWCVARGAEHATMATTESNAASLALFTGRFGYAPFRRPEFIGHPVHAHRLPVARGHRVFQLPPEVAAAAYARLLPPQDAEFLPADMPALLAHKLTLGTFVAVAADGASFAVLSVWDSTRSLSLRVSGAPALLRASLAALRALDRGAPWLHLPSIPDIFRPFGAYLLYGLRMSGPDGPALLRSLCHHAHNVARKNPACAVVAADISPDDPAAAAVPRWRRFCCDEDVWCIKNLNPDEHDADDWAAPPPPPGRHLFVDPREF.

Residues 12–210 (VRVREFDVEK…GHPVHAHRLP (199 aa)) enclose the N-acetyltransferase domain. Residues 44-68 (VHDHADDGDGAAAKEKKKTKTKTKK) form a disordered region. Residues 58–68 (EKKKTKTKTKK) are compositionally biased toward basic residues.

The protein belongs to the acetyltransferase family. Interacts (via C-terminus) with HDR3 (via N-terminus). Post-translationally, ubiquitinated at Lys-63 by HDR3. Polyubiquitination of GW6A delays its degradation by the 26S proteasome and enhances GW6A histone acetyltransferase activity. As to expression, expressed in roots, leaf blades, leaf sheaths, shoot apical meristem and young panicles.

It is found in the nucleus. Possesses intrinsic histone acetyltransferase activity and acts as a positive regulator of grain weight, hull size, yield, and plant biomass. Regulates postitively grain weight and yield by enlarging spikelet hulls via increasing cell number and accelerating grain filling. In vitro, catalyzes the acetylation of histone H4 at Lys-6 (H4K5ac), Lys-13 (H4K12ac) and Lys-17 (H4K16ac). Involved in the regulation of plastochron (the time interval between leaf initiation event). This is Acetyl transferase GW6a from Oryza sativa subsp. japonica (Rice).